Consider the following 354-residue polypeptide: Guanine nucleotide-binding protein G(o) subunit alpha (354 aa).

Residue Gly-2 is the site of N-myristoyl glycine attachment. Cys-3 is lipidated: S-palmitoyl cysteine. The G-alpha domain occupies 32–354 (KDVKLLLLGA…ANNLRGCGLY (323 aa)). Positions 35–48 (KLLLLGAGESGKST) are G1 motif. Residues Glu-43, Lys-46, Ser-47, Thr-48, Ser-152, Leu-176, Arg-177, Thr-178, and Arg-179 each coordinate GTP. Ser-47 lines the Mg(2+) pocket. Residues 174-182 (DILRTRVKT) form a G2 motif region. Thr-182 lines the Mg(2+) pocket. A G3 motif region spans residues 197–206 (FRLFDVGGQR). A 5-glutamyl histamine modification is found at Gln-205. A G4 motif region spans residues 266–273 (ILFLNKKD). 3 residues coordinate GTP: Asn-270, Asp-273, and Cys-325. Positions 324-329 (TCATDT) are G5 motif. At Asn-346 the chain carries Deamidated asparagine; in form Alpha-3. Cys-351 carries S-palmitoyl cysteine lipidation.

The protein belongs to the G-alpha family. G(i/o/t/z) subfamily. As to quaternary structure, g proteins are composed of 3 units; alpha, beta and gamma. The alpha chain contains the guanine nucleotide binding site. Forms a complex with GNB1 and GNG3. Interacts with RGS14. Interacts with RGS16. Interacts with RGS19. Interacts (when palmitoylated) with ADGRG3. Deamidation of Asn-346 converts alpha-1 to alpha-3. Post-translationally, histaminylated at Gln-205 residues by TGM2.

It is found in the cell membrane. The protein resides in the membrane. The catalysed reaction is GTP + H2O = GDP + phosphate + H(+). With respect to regulation, the GTPase activity is promoted by GTPAse activators, such as RGS14, RGS16 and RGS19. Functionally, guanine nucleotide-binding proteins (G proteins) function as transducers downstream of G protein-coupled receptors (GPCRs) in numerous signaling cascades. The alpha chain contains the guanine nucleotide binding site and alternates between an active, GTP-bound state and an inactive, GDP-bound state. Signaling by an activated GPCR promotes GDP release and GTP binding. The alpha subunit has a low GTPase activity that converts bound GTP to GDP, thereby terminating the signal. Both GDP release and GTP hydrolysis are modulated by numerous regulatory proteins. Signaling is mediated via effector proteins, such as adenylate cyclase. Inhibits adenylate cyclase activity, leading to decreased intracellular cAMP levels. In Cricetulus longicaudatus (Long-tailed dwarf hamster), this protein is Guanine nucleotide-binding protein G(o) subunit alpha (GNAO1).